A 589-amino-acid polypeptide reads, in one-letter code: L-fucose isomerase (589 aa).

Catalysis depends on proton acceptor residues glutamate 340 and aspartate 364. The Mn(2+) site is built by glutamate 340, aspartate 364, and histidine 527.

The protein belongs to the L-fucose isomerase family. The cofactor is Mn(2+).

It localises to the cytoplasm. It catalyses the reaction L-fucose = L-fuculose. The protein operates within carbohydrate degradation; L-fucose degradation; L-lactaldehyde and glycerone phosphate from L-fucose: step 1/3. Converts the aldose L-fucose into the corresponding ketose L-fuculose. The sequence is that of L-fucose isomerase from Haemophilus influenzae (strain PittEE).